A 249-amino-acid chain; its full sequence is uncharacterized protein (249 aa).

Residues 1 to 25 (MRYLNTKNIIAAGVLLSCMSSIAWG) form the signal peptide.

This sequence belongs to the periplasmic pilus chaperone family.

The protein resides in the periplasm. Functionally, could be required for the biogenesis of a putative fimbria. This is an uncharacterized protein from Escherichia coli (strain K12).